We begin with the raw amino-acid sequence, 361 residues long: UDP-N-acetylglucosamine--N-acetylmuramyl-(pentapeptide) pyrophosphoryl-undecaprenol N-acetylglucosamine transferase (361 aa).

Residues Thr12–Gly14, Asn126, Arg167, Ser192, Ile247, and Gln292 each bind UDP-N-acetyl-alpha-D-glucosamine.

Belongs to the glycosyltransferase 28 family. MurG subfamily.

The protein resides in the cell inner membrane. The enzyme catalyses di-trans,octa-cis-undecaprenyl diphospho-N-acetyl-alpha-D-muramoyl-L-alanyl-D-glutamyl-meso-2,6-diaminopimeloyl-D-alanyl-D-alanine + UDP-N-acetyl-alpha-D-glucosamine = di-trans,octa-cis-undecaprenyl diphospho-[N-acetyl-alpha-D-glucosaminyl-(1-&gt;4)]-N-acetyl-alpha-D-muramoyl-L-alanyl-D-glutamyl-meso-2,6-diaminopimeloyl-D-alanyl-D-alanine + UDP + H(+). It functions in the pathway cell wall biogenesis; peptidoglycan biosynthesis. Its function is as follows. Cell wall formation. Catalyzes the transfer of a GlcNAc subunit on undecaprenyl-pyrophosphoryl-MurNAc-pentapeptide (lipid intermediate I) to form undecaprenyl-pyrophosphoryl-MurNAc-(pentapeptide)GlcNAc (lipid intermediate II). The chain is UDP-N-acetylglucosamine--N-acetylmuramyl-(pentapeptide) pyrophosphoryl-undecaprenol N-acetylglucosamine transferase from Syntrophus aciditrophicus (strain SB).